A 432-amino-acid polypeptide reads, in one-letter code: 7-dehydrocholesterol reductase (432 aa).

Helical transmembrane passes span 12 to 34 (YASM…YTMV), 64 to 86 (LIAW…LLPG), 107 to 126 (LAAY…FGIF), 136 to 155 (GEIF…LLYI), 195 to 212 (FTNC…AVTY), 227 to 249 (MLVN…AGYW), 261 to 283 (FYIC…MYLV), 287 to 309 (VELG…YINY), and 371 to 393 (SAFF…VIFL).

The protein belongs to the ERG4/ERG24 family.

The protein localises to the endoplasmic reticulum membrane. The enzyme catalyses cholesterol + NADP(+) = 7-dehydrocholesterol + NADPH + H(+). Its pathway is lipid metabolism; steroid biosynthesis. Production of cholesterol by reduction of C7-C8 double bond of 7-dehydrocholesterol (7-DHC). Lesions in the gene coding for the enzyme cause dwarfism. The protein is 7-dehydrocholesterol reductase (DWF5) of Arabidopsis thaliana (Mouse-ear cress).